The primary structure comprises 433 residues: Ribosome biogenesis protein WDR12 homolog (433 aa).

Residues 21 to 102 (VEVFVVSYRH…ESVISIECIV (82 aa)) form a ubiquitin-like (UBL) domain region. WD repeat units follow at residues 114-151 (ALLD…LTSS), 153-194 (LHEE…SSTF), 203-242 (GHER…TSTV), 270-310 (GHKD…QINT), 312-351 (AAKK…GTLV), 357-397 (GHCG…TPLY), and 401-433 (GHSD…RRKM).

Belongs to the WD repeat WDR12/YTM1 family.

Its subcellular location is the nucleus. The protein resides in the nucleolus. The protein localises to the nucleoplasm. Required for maturation of ribosomal RNAs and formation of the large ribosomal subunit. The polypeptide is Ribosome biogenesis protein WDR12 homolog (Brugia malayi (Filarial nematode worm)).